Here is a 295-residue protein sequence, read N- to C-terminus: MGSRAELHTLLGGLSFLLLLMSGQGAKGGSFKESQGVCSRQTLVVPLRYNESYSQPVYKPYLTLCPGRRVCSTYRTTYRVAWREVRREVQQTHAVCCQGWKKRHPGALTCDEAICAKPCQNGGVCVRPDQCECAPGWGGRHCHVDVDECRTGVTLCSHRCHNTAGSFTCGCPHGLVLGPDGRTCAEGASEPPTSASILSVAVREAGREDRALRREIRELRGRLERLEQWAGQAGAWVRAVLPMPPEELQPEQVAELWGRGDRIESLSDQVLLLEEKLGACSCEDNSLGPGLSRRR.

An N-terminal signal peptide occupies residues methionine 1–glycine 25. The EMI domain maps to serine 34–glutamate 112. Intrachain disulfides connect cysteine 38–cysteine 97, cysteine 65–cysteine 71, cysteine 96–cysteine 110, cysteine 115–cysteine 125, cysteine 119–cysteine 131, cysteine 133–cysteine 142, cysteine 149–cysteine 160, cysteine 156–cysteine 169, and cysteine 171–cysteine 184. A glycan (N-linked (GlcNAc...) asparagine) is linked at asparagine 50. The region spanning aspartate 111–histidine 143 is the EGF-like 1 domain. Residues aspartate 145 to alanine 185 form the EGF-like 2; calcium-binding domain. A coiled-coil region spans residues valine 202–alanine 233.

It is found in the secreted. The protein is Epidermal growth factor-like protein 8 (EGFL8) of Sus scrofa (Pig).